Reading from the N-terminus, the 290-residue chain is Secreted chorismate mutase (290 aa).

Residues 1–21 form the signal peptide; sequence MKLSVSIFVLLAVSAFGGGSA. Residues 117–140 form a KWL1-binding extensive loop region (ELR) region; it reads VVLSRDTVLDKPVVGKGIFPIGRR. Residues asparagine 159 and asparagine 208 are each glycosylated (N-linked (GlcNAc...) asparagine).

In terms of assembly, homodimer. Forms a heterodimer with the host cytosolic chorismate mutase CM2. Interacts with the host kiwellin KWL1 which acts as a defense protein that protects maize from infection.

The protein localises to the secreted. It localises to the host cytoplasm. It is found in the host cytosol. The catalysed reaction is chorismate = prephenate. Contrary to classical chorismate mutases, CMU1 is not subject to allosteric regulation by tryptophan and tyrosine. Activity is decreased in a non-competitive and allosteric manner by the binding of the host defense kiwellin KWL1 which probably blocks substrate access to the active site of CMU1. Its function is as follows. Secreted chorismate mutase that is one component of a cocktail of effectors shaping the host metabolome and acting as virulence factors. The enzyme is taken up by plant cells, can spread to neighboring cells where it affects the biosynthesis of the plant immune signal salicylic acid by channelling chorismate into the phenylpropanoid pathway. Interferes with the activity of host cytosolic chorismate mutase CM2 through heterodimerization. In Mycosarcoma maydis (Corn smut fungus), this protein is Secreted chorismate mutase (CMU1).